A 698-amino-acid chain; its full sequence is Epithelial sodium channel subunit alpha (698 aa).

Positions 1–70 (MLDHTRAPEL…SAPRQPTEEE (70 aa)) are disordered. The Cytoplasmic portion of the chain corresponds to 1–110 (MLDHTRAPEL…CSKHNRMKTA (110 aa)). A helical transmembrane segment spans residues 111 to 131 (FWAVLWLCTFGMMYWQFALLF). Over 132–589 (EEYLSYPVSL…SQWSLWFGSS (458 aa)) the chain is Extracellular. Cystine bridges form between Cys-158–Cys-332, Cys-256–Cys-263, and Cys-309–Cys-316. N-linked (GlcNAc...) asparagine glycosylation occurs at Asn-190. The segment at 200–270 (RRRSSRDLLG…SDCFYQTYSS (71 aa)) is gating release of inhibition by proteolysis (GRIP); protease-sensitive region that is responsible for the proteolytic activation of the channel. Residues 213–243 (HPLQRLRTPPPPYSGRTARSGSSSVRDNNPQ) are disordered. The segment covering 229-243 (TARSGSSSVRDNNPQ) has biased composition (polar residues). Residue Asn-259 is glycosylated (N-linked (GlcNAc...) asparagine). 3 N-linked (GlcNAc...) asparagine glycosylation sites follow: Asn-320, Asn-339, and Asn-424. 7 disulfides stabilise this stretch: Cys-421/Cys-506, Cys-443/Cys-483, Cys-443/Cys-502, Cys-447/Cys-498, Cys-456/Cys-483, Cys-456/Cys-506, and Cys-458/Cys-472. N-linked (GlcNAc...) asparagine glycosylation is present at Asn-538. The chain crosses the membrane as a helical span at residues 590 to 610 (VLSVVEMAELIFDLLVITLLM). Residues 611–698 (LLRRFRSRYW…DCSACALAAL (88 aa)) are Cytoplasmic-facing. The interval 637–663 (ASSFPSRFCPHPTSPPPSLPQQGMTPP) is disordered. The short motif at 669–673 (PPPAY) is the PY motif; recruits WW domain-containing proteins and is thereby required for ubiquitination and inhibition of the channel by NEDD4 and NEDD4L element.

This sequence belongs to the amiloride-sensitive sodium channel (TC 1.A.6) family. SCNN1A subfamily. In terms of assembly, heterotrimer; containing an alpha/SCNN1A, a beta/SCNN1B and a gamma/SCNN1G subunit. Interacts with WWP1 (via WW domains). Interacts with WWP2 (via WW domains); inhibits the channel. Interacts with BPIFA1; the interaction is indirect via SCNN1B and inhibits the proteolytic processing of SCNN1A and SCNN1G and the activation of ENaC. Interacts with the full-length immature form of PCSK9 (pro-PCSK9). Post-translationally, ubiquitinated. Can be ubiquitinated at multiple sites and undergo monoubiquitination and polyubiquitination. Ubiquitination by NEDD4 or NEDD4L inhibits the ENaC channel through endocytosis, intracellular retention and degradation of its individual subunits. N-glycosylated. In terms of processing, ENaC is activated through the proteolytic maturation of its subunits. Furin cleaves the SCNN1A subunit, which results in a stepwise increase in the open probability of the channel due to the release of an inhibitory tract. BPIFA1, which is recruited by the SCNN1B subunit, prevents the proteolytic activation of ENaC. As to expression, detected in kidney, lung and testis (at protein level). In the testis, detected within the seminiferous tubules but not in the interstitial cells (at protein level).

The protein localises to the apical cell membrane. It localises to the cell projection. It is found in the cilium. The protein resides in the cytoplasmic granule. Its subcellular location is the cytoplasm. The protein localises to the cytoplasmic vesicle. It localises to the secretory vesicle. It is found in the acrosome. The protein resides in the flagellum. It catalyses the reaction Na(+)(in) = Na(+)(out). With respect to regulation, originally identified and characterized by its inhibition by the diuretic drug amiloride. This is one of the three pore-forming subunits of the heterotrimeric epithelial sodium channel (ENaC), a critical regulator of sodium balance and fluid homeostasis. ENaC operates in epithelial tissues, where it mediates the electrodiffusion of sodium ions from extracellular fluid through the apical membrane of cells, with water following osmotically. It plays a key role in maintaining sodium homeostasis through electrogenic sodium reabsorption in the kidneys. Additionally, ENaC is essential for airway surface liquid homeostasis, which is crucial for proper mucus clearance. This is Epithelial sodium channel subunit alpha from Rattus norvegicus (Rat).